A 194-amino-acid chain; its full sequence is RNA polymerase II subunit A C-terminal domain phosphatase SSU72 like protein 6 (194 aa).

It belongs to the SSU72 phosphatase family.

Its subcellular location is the nucleus. The catalysed reaction is O-phospho-L-seryl-[protein] + H2O = L-seryl-[protein] + phosphate. The enzyme catalyses O-phospho-L-threonyl-[protein] + H2O = L-threonyl-[protein] + phosphate. In terms of biological role, protein phosphatase that catalyzes the dephosphorylation of the C-terminal domain of RNA polymerase II. Plays a role in RNA processing and termination. This chain is RNA polymerase II subunit A C-terminal domain phosphatase SSU72 like protein 6, found in Homo sapiens (Human).